The chain runs to 683 residues: Patellin-2 (683 aa).

The interval 1-23 (MAQEEIQKPTASVPVVKEETPAP) is disordered. Ala2 bears the N-acetylalanine mark. A Phosphoserine modification is found at Ser79. Residues 86 to 163 (LASELQEAEK…ETKEEEKSAA (78 aa)) adopt a coiled-coil conformation. The interval 111 to 279 (KREFTAPPPP…KKEEKATAST (169 aa)) is disordered. The segment covering 124 to 161 (VKEEKVEEKKTEETEEKKEEVKTEEKSLEAETKEEEKS) has biased composition (basic and acidic residues). Positions 232-243 (PVETTPAAPVTT) are enriched in low complexity. Over residues 244–275 (ETKEEEKAAPVTTETKEEEKAAPGETKKEEKA) the composition is skewed to basic and acidic residues. Residue Lys394 forms a Glycyl lysine isopeptide (Lys-Gly) (interchain with G-Cter in ubiquitin) linkage. In terms of domain architecture, CRAL-TRIO spans 404 to 576 (EDLEGSEFEK…KYGGLSKDSP (173 aa)). The GOLD domain occupies 580-681 (EDGVTEAVVK…KKKVLYRSKT (102 aa)).

Belongs to the patellin family. As to quaternary structure, interacts with the deubiquitinating enzyme AMSH3.

It localises to the membrane. It is found in the cytoplasm. Carrier protein that may be involved in membrane-trafficking events associated with cell plate formation during cytokinesis. Binds to some hydrophobic molecules such as phosphoinositides and promotes their transfer between the different cellular sites. The chain is Patellin-2 (PATL2) from Arabidopsis thaliana (Mouse-ear cress).